We begin with the raw amino-acid sequence, 404 residues long: Acetate kinase (404 aa).

A Mg(2+)-binding site is contributed by Asn-7. Lys-14 is a binding site for ATP. Arg-95 serves as a coordination point for substrate. Asp-152 functions as the Proton donor/acceptor in the catalytic mechanism. Residues 212-216, 286-288, and 334-338 contribute to the ATP site; these read HLGNG, DMR, and GIGEN. Position 388 (Glu-388) interacts with Mg(2+).

The protein belongs to the acetokinase family. In terms of assembly, homodimer. Mg(2+) is required as a cofactor. It depends on Mn(2+) as a cofactor.

It is found in the cytoplasm. It catalyses the reaction acetate + ATP = acetyl phosphate + ADP. The protein operates within metabolic intermediate biosynthesis; acetyl-CoA biosynthesis; acetyl-CoA from acetate: step 1/2. Catalyzes the formation of acetyl phosphate from acetate and ATP. Can also catalyze the reverse reaction. This chain is Acetate kinase, found in Lawsonia intracellularis (strain PHE/MN1-00).